A 332-amino-acid chain; its full sequence is Tryptophan--tRNA ligase (332 aa).

Residues 13–15 and 21–22 each bind ATP; these read KPS and GN. The 'HIGH' region motif lies at 14–22; sequence PSGDLTLGN. Position 137 (D137) interacts with L-tryptophan. ATP is bound by residues 149–151, I188, and 197–201; these read GKD and KMSKS. The 'KMSKS' region signature appears at 197-201; it reads KMSKS.

The protein belongs to the class-I aminoacyl-tRNA synthetase family. In terms of assembly, homodimer.

It is found in the cytoplasm. It catalyses the reaction tRNA(Trp) + L-tryptophan + ATP = L-tryptophyl-tRNA(Trp) + AMP + diphosphate + H(+). Functionally, catalyzes the attachment of tryptophan to tRNA(Trp). The sequence is that of Tryptophan--tRNA ligase from Clostridium perfringens (strain 13 / Type A).